The sequence spans 344 residues: Arginine N-succinyltransferase (344 aa).

Residue L125 coordinates succinyl-CoA. H229 acts as the Proton donor in catalysis.

It belongs to the arginine N-succinyltransferase family.

The enzyme catalyses succinyl-CoA + L-arginine = N(2)-succinyl-L-arginine + CoA + H(+). Its pathway is amino-acid degradation; L-arginine degradation via AST pathway; L-glutamate and succinate from L-arginine: step 1/5. In terms of biological role, catalyzes the transfer of succinyl-CoA to arginine to produce N(2)-succinylarginine. This chain is Arginine N-succinyltransferase, found in Shigella boydii serotype 4 (strain Sb227).